The following is a 1447-amino-acid chain: Adhesion G protein-coupled receptor L3 (1447 aa).

The N-terminal stretch at 1-19 is a signal peptide; that stretch reads MWPSQLLIFMMLLAPIIHA. The Extracellular segment spans residues 20–862; it reads FSRAPIPMAV…VKHSDAVHDL (843 aa). The SUEL-type lectin domain maps to 35-124; the sequence is SCESYPIELR…KYLEVQYECV (90 aa). Disulfide bonds link C36–C66, C45–C123, C78–C110, C91–C97, and C135–C317. N-linked (GlcNAc...) asparagine glycosylation occurs at N93. Residues 134 to 393 enclose the Olfactomedin-like domain; sequence LCPGLLKGVY…VVKYSLDFGP (260 aa). The interaction with FLRT3 stretch occupies residues 249–279; it reads YHDTSPYRWGGKSDIDLAVDENGLWVIYATE. Ca(2+)-binding residues include D264, N312, A313, and V367. The tract at residues 426–473 is disordered; the sequence is DISTTGPLGMGSTTTSTTLRTTTLSPGRSTTPSVSGRRNRSTSTPSPA. The span at 428–458 shows a compositional bias: low complexity; it reads STTGPLGMGSTTTSTTLRTTTLSPGRSTTPS. N464, N549, N746, N759, N804, and N830 each carry an N-linked (GlcNAc...) asparagine glycan. The GAIN-B domain occupies 675–854; that stretch reads DIVRENTDNI…AVLMAHVEVK (180 aa). 2 disulfide bridges follow: C805/C836 and C824/C838. A GPS region spans residues 805–854; the sequence is CSFWSYSKRTMTGYWSTQGCRLLTTNKTHTTCSCNHLTNFAVLMAHVEVK. A stachel region spans residues 842–855; it reads TNFAVLMAHVEVKH. A helical transmembrane segment spans residues 863–888; it reads LLDVITWVGILLSLVCLLICIFTFCF. Residues 889–896 lie on the Cytoplasmic side of the membrane; that stretch reads FRGLQSDR. The chain crosses the membrane as a helical span at residues 897–918; sequence NTIHKNLCISLFVAELLFLIGI. Residues 919-926 lie on the Extracellular side of the membrane; that stretch reads NRTDQPIA. The helical transmembrane segment at 927 to 950 threads the bilayer; it reads CAVFAALLHFFFLAAFTWMFLEGV. Cysteines 927 and 999 form a disulfide. Over 951 to 967 the chain is Cytoplasmic; sequence QLYIMLVEVFESEHSRR. The helical transmembrane segment at 968-990 threads the bilayer; the sequence is KYFYLVGYGMPALIVAVSAAVDY. Residues 991–1005 are Extracellular-facing; it reads RSYGTDKVCWLRLDT. A helical transmembrane segment spans residues 1006–1027; that stretch reads YFIWSFIGPATLIIMLNVIFLG. The Cytoplasmic segment spans residues 1028-1053; that stretch reads IALYKMFHHTAILKPESGCLDNIKSW. A helical membrane pass occupies residues 1054–1073; sequence VIGAIALLCLLGLTWAFGLM. Residues 1074–1078 lie on the Extracellular side of the membrane; sequence YINES. N1076 carries N-linked (GlcNAc...) asparagine glycosylation. A helical transmembrane segment spans residues 1079–1104; the sequence is TVIMAYLFTIFNSLQGMFIFIFHCVL. The Cytoplasmic portion of the chain corresponds to 1105 to 1447; the sequence is QKKVRKEYGK…KGPAHLVTSL (343 aa). The segment at 1123 to 1147 is disordered; it reads GKSTESSIGSGKTSGSRTPGRYSTG. S1164 carries the phosphoserine modification. Residues 1423 to 1447 form a disordered region; that stretch reads IVPPNKDGTPPEGSSKGPAHLVTSL. Residues 1442-1447 carry the PDZ-binding motif; that stretch reads HLVTSL.

Belongs to the G-protein coupled receptor 2 family. LN-TM7 subfamily. Heterodimer of 2 chains generated by proteolytic processing; the large extracellular N-terminal fragment and the membrane-bound C-terminal fragment predominantly remain associated and non-covalently linked. Interacts (via olfactomedin-like domain) with FLRT1 (via extracellular domain). Interacts (via olfactomedin-like domain) with FLRT2 (via extracellular domain). Interacts (via olfactomedin-like domain) with FLRT3 (via extracellular domain); the interaction is direct. Interacts (via extracellular domain) with TENM1. Interacts (via extracellular domain) with TENM2. Interacts (via extracellular domain) with TENM3. Identified in a complex with FLRT3 and UNC5B; does not interact with UNC5B by itself. Identified in a complex with FLRT3 and UNC5D; does not interact with UNC5D by itself. As to quaternary structure, interacts (via PDZ-binding motif) with SHANK3. Interacts (via PDZ-binding motif) with DLG4. Autoproteolytically processed at the GPS region of the GAIN-B domain; this cleavage modulates receptor activity.

The protein localises to the cell membrane. It is found in the postsynaptic cell membrane. The protein resides in the cell projection. It localises to the axon. Its subcellular location is the cell junction. Forms a heterodimer of 2 chains generated by proteolytic processing that remain associated through non-covalent interactions mediated by the GAIN-B domain. In the inactivated receptor, the Stachel sequence (also named stalk) is embedded in the GAIN-B domain, where it adopts a beta-strand conformation. On activation, the Stachel moves into the 7 transmembrane region and adopts a twisted hook-shaped configuration that forms contacts within the receptor, leading to coupling of a G-alpha protein, which activates signaling. The cleaved GAIN-B and N-terminal domains can then dissociate from the rest of the receptor. Functionally, orphan adhesion G-protein coupled receptor (aGPCR), which mediates synapse specificity. Ligand binding causes a conformation change that triggers signaling via guanine nucleotide-binding proteins (G proteins) and modulates the activity of downstream effectors. ADGRL3 is coupled with different classes of G alpha proteins, such as G(12)/G(13), G(s), G(i) or G(q), depending on the context. Coupling to G(12)/G(13) G proteins, which mediates the activation Rho small GTPases is the most efficient. Following G-protein coupled receptor activation, associates with cell adhesion molecules that are expressed at the surface of adjacent cells to direct synapse specificity. Specifically mediates the establishment of Schaffer-collateral synapses formed by CA3-region axons on CA1-region pyramidal neurons in the hippocampus. Localizes to postsynaptic spines in excitatory synapses in the S.oriens and S.radiatum and interacts with presynaptic cell adhesion molecules FLRT3 and TENM2, promoting synapse formation. Plays a role in the development of glutamatergic synapses in the cortex. Important in determining the connectivity rates between the principal neurons in the cortex. In terms of biological role, orphan adhesion G-protein coupled receptor (aGPCR), which mediates synapse specificity. Ligand binding causes a conformation change that triggers signaling via guanine nucleotide-binding proteins (G proteins) and modulates the activity of downstream effectors, such as adenylate cyclase. Isoform 1 is specifically coupled to G(s) G proteins and mediates activation of adenylate cyclase activity. Following G-protein coupled receptor activation, undergoes liquid-liquid phase transition, associates with (1) cell adhesion molecules that are expressed at the surface of adjacent cells, as well as (2) PDZ-containing proteins, such as SHANK3 and DLG4, in the cytoplasm to direct synapse formation. This chain is Adhesion G protein-coupled receptor L3, found in Homo sapiens (Human).